The chain runs to 404 residues: Cysteine desulfurase IscS (404 aa).

Pyridoxal 5'-phosphate is bound by residues 75–76 (AT), Asn-155, Gln-183, and 203–205 (SAH). The residue at position 206 (Lys-206) is an N6-(pyridoxal phosphate)lysine. Residue Thr-243 coordinates pyridoxal 5'-phosphate. Cys-328 functions as the Cysteine persulfide intermediate in the catalytic mechanism. Cys-328 provides a ligand contact to [2Fe-2S] cluster.

This sequence belongs to the class-V pyridoxal-phosphate-dependent aminotransferase family. NifS/IscS subfamily. In terms of assembly, homodimer. Forms a heterotetramer with IscU, interacts with other sulfur acceptors. Pyridoxal 5'-phosphate serves as cofactor.

The protein localises to the cytoplasm. It carries out the reaction (sulfur carrier)-H + L-cysteine = (sulfur carrier)-SH + L-alanine. Its pathway is cofactor biosynthesis; iron-sulfur cluster biosynthesis. In terms of biological role, master enzyme that delivers sulfur to a number of partners involved in Fe-S cluster assembly, tRNA modification or cofactor biosynthesis. Catalyzes the removal of elemental sulfur atoms from cysteine to produce alanine. Functions as a sulfur delivery protein for Fe-S cluster synthesis onto IscU, an Fe-S scaffold assembly protein, as well as other S acceptor proteins. The chain is Cysteine desulfurase IscS from Colwellia psychrerythraea (strain 34H / ATCC BAA-681) (Vibrio psychroerythus).